Here is a 410-residue protein sequence, read N- to C-terminus: Regulator of microtubule dynamics protein 2 (410 aa).

Residues 10 to 27 (ILGIVVGTAGISLLLLWY) form a helical membrane-spanning segment. A coiled-coil region spans residues 71 to 109 (RQLQILEKLNELLTHMEELKEEIRVLKEAIPKLEEYIQG). Ser121 is subject to Phosphoserine. Residues 122–131 (PQHRARKRRL) show a composition bias toward basic residues. The tract at residues 122–153 (PQHRARKRRLATVQSSATSNSSEEAESEGGYV) is disordered. Thr139 is modified (phosphothreonine). Phosphotyrosine is present on Tyr152. Residues Thr154 and Thr157 each carry the phosphothreonine modification.

It belongs to the RMDN family. In terms of assembly, interacts with microtubules.

Its subcellular location is the membrane. It localises to the cytoplasm. The protein resides in the cytoskeleton. It is found in the spindle. The protein localises to the spindle pole. This Bos taurus (Bovine) protein is Regulator of microtubule dynamics protein 2 (RMDN2).